A 519-amino-acid polypeptide reads, in one-letter code: Arabinose import ATP-binding protein AraG 2 (519 aa).

2 ABC transporter domains span residues 29–264 and 264–515; these read LSLD…MVGR and RSIE…LIKL. Position 61-68 (61-68) interacts with ATP; sequence GENGAGKS.

This sequence belongs to the ABC transporter superfamily. Arabinose importer (TC 3.A.1.2.2) family. The complex is composed of two ATP-binding proteins (AraG), two transmembrane proteins (AraH) and a solute-binding protein (AraF).

The protein localises to the cell inner membrane. It carries out the reaction L-arabinose(out) + ATP + H2O = L-arabinose(in) + ADP + phosphate + H(+). Functionally, part of the ABC transporter complex AraFGH involved in arabinose import. Responsible for energy coupling to the transport system. The chain is Arabinose import ATP-binding protein AraG 2 from Burkholderia ambifaria (strain ATCC BAA-244 / DSM 16087 / CCUG 44356 / LMG 19182 / AMMD) (Burkholderia cepacia (strain AMMD)).